A 448-amino-acid chain; its full sequence is ATP-dependent protease ATPase subunit HslU (448 aa).

ATP contacts are provided by residues Ile-18, 60 to 65 (GVGKTE), Asp-261, Glu-326, and Arg-398.

It belongs to the ClpX chaperone family. HslU subfamily. A double ring-shaped homohexamer of HslV is capped on each side by a ring-shaped HslU homohexamer. The assembly of the HslU/HslV complex is dependent on binding of ATP.

The protein resides in the cytoplasm. Its function is as follows. ATPase subunit of a proteasome-like degradation complex; this subunit has chaperone activity. The binding of ATP and its subsequent hydrolysis by HslU are essential for unfolding of protein substrates subsequently hydrolyzed by HslV. HslU recognizes the N-terminal part of its protein substrates and unfolds these before they are guided to HslV for hydrolysis. This Paraburkholderia phytofirmans (strain DSM 17436 / LMG 22146 / PsJN) (Burkholderia phytofirmans) protein is ATP-dependent protease ATPase subunit HslU.